The chain runs to 177 residues: Putative pre-16S rRNA nuclease (177 aa).

The protein belongs to the YqgF nuclease family.

The protein resides in the cytoplasm. Could be a nuclease involved in processing of the 5'-end of pre-16S rRNA. The protein is Putative pre-16S rRNA nuclease of Psychrobacter arcticus (strain DSM 17307 / VKM B-2377 / 273-4).